Here is a 140-residue protein sequence, read N- to C-terminus: Sec-independent protein translocase protein TatB (140 aa).

The helical transmembrane segment at 2–22 threads the bilayer; it reads LPGIGFSELLLIGLAALIIIG. Residues 90–140 are disordered; sequence VNSAVMREHPVSPPPPATPPAPPAELPPEAAPHADSQNAPPEADPAKGDRT. Over residues 100 to 119 the composition is skewed to pro residues; sequence VSPPPPATPPAPPAELPPEA.

This sequence belongs to the TatB family. In terms of assembly, the Tat system comprises two distinct complexes: a TatABC complex, containing multiple copies of TatA, TatB and TatC subunits, and a separate TatA complex, containing only TatA subunits. Substrates initially bind to the TatABC complex, which probably triggers association of the separate TatA complex to form the active translocon.

The protein resides in the cell inner membrane. In terms of biological role, part of the twin-arginine translocation (Tat) system that transports large folded proteins containing a characteristic twin-arginine motif in their signal peptide across membranes. Together with TatC, TatB is part of a receptor directly interacting with Tat signal peptides. TatB may form an oligomeric binding site that transiently accommodates folded Tat precursor proteins before their translocation. The polypeptide is Sec-independent protein translocase protein TatB (Hyphomonas neptunium (strain ATCC 15444)).